Consider the following 902-residue polypeptide: MKIAVIGQSLFGQEVYCQLRKEGHEVVGVFTIPDKDGKADPLGLEAEKDGVPVFKFPRWRARGQALPEVVAKYQALGAELNVLPFCSQFIPMEVINAPRHGSIIYHPSLLPRHRGASAINWTLIHGDKKGGFTIFWADDGLDTGDLLLQKECDVLPDDTVSTLYNRFLFPEGIKGMVQAVRLIAEGTAPRRPQPEEGATYEGIQKKETAMINWDQPAEAIHNWIRGNDKVPGAWTEACGQKLTFFNSTLNTSGLVAQGEALPIPGAHRPGLVTKAGLILFGNDDRMLLVKNIQLEDGKMMPASQFFKGSASSALELTEEELATAEAVRSSWMRILPNVPEVEDSTDFFKSGAASVDVVRLVEEVKELCDGLELENEDVYMATTFGDFIQLLVRKLRGEDGESECVINYVEKAVKKLTLQMPYQLFIGGEFVDAEGAKTYSTINPTDGSVICQVSLAQVSDVDKAVAAAKEAFENGLWGKINARDRGRLLYRLADLMEQHQEELATIEALDAGAVYTLALKTHVGMSIQTFRYFAGWCDKIQGATIPINQARPNRNLTLTKKEPVGVCGIVIPWNYPLMMLSWKTAACLAAGNTVVIKPAQVTPLTALKFAELTLKAGIPKGVVNILPGSGSLVGQRLSDHPDVRKIGFTGSTEVGKHIMKSCALSNVKKVSLELGGKSPLIIFADCDLNKAVQMGMSSVFFNKGENCIAAGRLFVEDSIHDQFVQKVVEEVGKMKIGNPLDRDTNHGPQNHEAHLRKLVEYCQRGVKEGATLVCGGNQVPRPGFFFQPTVFTDVEDHMYIAKEESFGPIMIISRFADGDVDAVLSRANATEFGLASGVFTRDINKALYVSDKLQAGTVFVNTYNKTDVAAPFGGFKQSGFGKDLGEAALNEYLRIKTVTFEY.

Residues 1–310 (MKIAVIGQSL…PASQFFKGSA (310 aa)) are hydrolase domain. Serine 9 bears the Phosphoserine mark. Lysine 38 is subject to N6-succinyllysine. Residue 88-90 (QFI) coordinates (6R)-10-formyltetrahydrofolate. The Proton donor role is filled by histidine 106. Aspartate 142 serves as a coordination point for (6R)-10-formyltetrahydrofolate. Positions 318–395 (EEELATAEAV…DFIQLLVRKL (78 aa)) constitute a Carrier domain. Position 354 is an O-(pantetheine 4'-phosphoryl)serine (serine 354). Residues 417–902 (TLQMPYQLFI…LRIKTVTFEY (486 aa)) are aldehyde dehydrogenase domain. NADP(+) is bound by residues 571 to 573 (IPW) and 597 to 600 (KPAQ). A phosphoserine mark is found at serine 629 and serine 631. Residues 630-635 (GSLVGQ) and 650-651 (GS) contribute to the NADP(+) site. N6-succinyllysine is present on lysine 660. The Proton acceptor role is filled by glutamate 673. Residue 673 to 674 (EL) participates in NADP(+) binding. Cysteine 707 acts as the Proton donor in catalysis. Lysine 757 provides a ligand contact to NADP(+). Lysine 767 carries the N6-succinyllysine modification. 804–806 (ESF) contacts NADP(+). Position 825 is a phosphoserine (serine 825). The residue at position 882 (lysine 882) is an N6-acetyllysine.

It in the N-terminal section; belongs to the GART family. The protein in the C-terminal section; belongs to the aldehyde dehydrogenase family. ALDH1L subfamily. In terms of assembly, homotetramer. Post-translationally, phosphopantetheinylation at Ser-354 by AASDHPPT is required for the formyltetrahydrofolate dehydrogenase activity. Highly expressed in liver (at protein level). Also expressed in pancreas, brain and lung (at protein level).

Its subcellular location is the cytoplasm. The protein resides in the cytosol. The enzyme catalyses (6R)-10-formyltetrahydrofolate + NADP(+) + H2O = (6S)-5,6,7,8-tetrahydrofolate + CO2 + NADPH + H(+). Its function is as follows. Cytosolic 10-formyltetrahydrofolate dehydrogenase that catalyzes the NADP(+)-dependent conversion of 10-formyltetrahydrofolate to tetrahydrofolate and carbon dioxide. May also have an NADP(+)-dependent aldehyde dehydrogenase activity towards formaldehyde, acetaldehyde, propionaldehyde, and benzaldehyde. The protein is Cytosolic 10-formyltetrahydrofolate dehydrogenase of Mus musculus (Mouse).